The following is a 143-amino-acid chain: Transcription antitermination protein NusB (143 aa).

The protein belongs to the NusB family.

Its function is as follows. Involved in transcription antitermination. Required for transcription of ribosomal RNA (rRNA) genes. Binds specifically to the boxA antiterminator sequence of the ribosomal RNA (rrn) operons. The sequence is that of Transcription antitermination protein NusB from Dehalococcoides mccartyi (strain ATCC BAA-2266 / KCTC 15142 / 195) (Dehalococcoides ethenogenes (strain 195)).